The following is a 339-amino-acid chain: Phosphate acyltransferase (339 aa).

Belongs to the PlsX family. As to quaternary structure, homodimer. Probably interacts with PlsY.

Its subcellular location is the cytoplasm. It catalyses the reaction a fatty acyl-[ACP] + phosphate = an acyl phosphate + holo-[ACP]. The protein operates within lipid metabolism; phospholipid metabolism. Catalyzes the reversible formation of acyl-phosphate (acyl-PO(4)) from acyl-[acyl-carrier-protein] (acyl-ACP). This enzyme utilizes acyl-ACP as fatty acyl donor, but not acyl-CoA. The chain is Phosphate acyltransferase from Methylococcus capsulatus (strain ATCC 33009 / NCIMB 11132 / Bath).